The following is a 131-amino-acid chain: Large ribosomal subunit protein bL17 (131 aa).

It belongs to the bacterial ribosomal protein bL17 family. In terms of assembly, part of the 50S ribosomal subunit. Contacts protein L32.

The sequence is that of Large ribosomal subunit protein bL17 from Thermotoga sp. (strain RQ2).